The following is a 329-amino-acid chain: MTDSAYRVDTISRLAQWRIHNLSSSTYRKSDPFKMGLWNWHLSVEKSKMLLNVKLYPEVSNLTRENPPVASFALRVVSSTGERKALSHPEVIDKRIKTNEDFIWTIEVPLTGKIIIDVEFLDLKVLSQDSGELYSIWANGSTENQSQVTAVTSLGRMLTESIYTDITINASDGSIGAHRAVLAARSPVFRSMFLHDLKEKELSEINVLDMPLDACQAFLSYIYGNIQNEDFLIHRLALLQAAEKYDIADLKEACHLSLLDDIDTKNVLERLQNAYLYQLPELKASCMRYLVKFGKIFEIRDEFNIFMQCADRDLISEIFHEVLSTWKGF.

A BTB domain is found at 164–231 (TDITINASDG…IYGNIQNEDF (68 aa)).

It participates in protein modification; protein ubiquitination. Functionally, may act as a substrate-specific adapter of an E3 ubiquitin-protein ligase complex (CUL3-RBX1-BTB) which mediates the ubiquitination and subsequent proteasomal degradation of target proteins. This chain is BTB/POZ domain-containing protein At1g55760, found in Arabidopsis thaliana (Mouse-ear cress).